We begin with the raw amino-acid sequence, 692 residues long: Elongation factor G (692 aa).

In terms of domain architecture, tr-type G spans 9 to 284 (EKIRNIGIMA…AVVDYLPSPV (276 aa)). GTP contacts are provided by residues 18-25 (AHIDAGKT), 82-86 (DTPGH), and 136-139 (NKMD).

This sequence belongs to the TRAFAC class translation factor GTPase superfamily. Classic translation factor GTPase family. EF-G/EF-2 subfamily.

It localises to the cytoplasm. Catalyzes the GTP-dependent ribosomal translocation step during translation elongation. During this step, the ribosome changes from the pre-translocational (PRE) to the post-translocational (POST) state as the newly formed A-site-bound peptidyl-tRNA and P-site-bound deacylated tRNA move to the P and E sites, respectively. Catalyzes the coordinated movement of the two tRNA molecules, the mRNA and conformational changes in the ribosome. The chain is Elongation factor G from Neorickettsia sennetsu (strain ATCC VR-367 / Miyayama) (Ehrlichia sennetsu).